The chain runs to 116 residues: Large ribosomal subunit protein bL20 (116 aa).

It belongs to the bacterial ribosomal protein bL20 family.

In terms of biological role, binds directly to 23S ribosomal RNA and is necessary for the in vitro assembly process of the 50S ribosomal subunit. It is not involved in the protein synthesizing functions of that subunit. In Desulfosudis oleivorans (strain DSM 6200 / JCM 39069 / Hxd3) (Desulfococcus oleovorans), this protein is Large ribosomal subunit protein bL20.